The sequence spans 592 residues: Pyruvate decarboxylase 3 (592 aa).

Asp54 and His141 together coordinate substrate. The interval 419–501 is thiamine pyrophosphate binding; sequence DSWFNCQKLK…FLINNGGYTI (83 aa). Residues Asp469, Asn496, and Gly498 each coordinate Mg(2+). Glu502 lines the substrate pocket.

The protein belongs to the TPP enzyme family. As to quaternary structure, homotetramer. Requires a metal cation as cofactor. Thiamine diphosphate serves as cofactor. In terms of tissue distribution, expressed at low levels in roots and shoots.

It catalyses the reaction a 2-oxocarboxylate + H(+) = an aldehyde + CO2. This is Pyruvate decarboxylase 3 (PDC3) from Arabidopsis thaliana (Mouse-ear cress).